Reading from the N-terminus, the 1005-residue chain is DNA polymerase (1005 aa).

The protein belongs to the DNA polymerase type-B family. As to quaternary structure, interacts with OPG148. Component of the Uracil-DNA glycosylase(UDG)-OPG148-polymerase complex; OPG148 and OPG116/UDG form a heterodimeric processivity factor that associates with OPG071 to form the processive polymerase holoenzyme.

It carries out the reaction DNA(n) + a 2'-deoxyribonucleoside 5'-triphosphate = DNA(n+1) + diphosphate. Functionally, catalyzes DNA synthesis. Acquires processivity by associating with a heterodimeric processivity factor comprised of the viral OPG148 and OPG116 proteins, thereby forming the DNA polymerase holoenzyme. Displays 3'- to 5' exonuclease activity. Might participate in viral DNA recombination. Does not perform OPG116/D4synthesis across an abasic site. This Variola virus (isolate Human/India/Ind3/1967) (VARV) protein is DNA polymerase (OPG071).